Reading from the N-terminus, the 185-residue chain is Guanylate kinase (185 aa).

One can recognise a Guanylate kinase-like domain in the interval 4 to 181 (GALYVVSGPS…ACNDLISIIE (178 aa)). 11-18 (GPSGAGKS) serves as a coordination point for ATP.

It belongs to the guanylate kinase family.

Its subcellular location is the cytoplasm. It catalyses the reaction GMP + ATP = GDP + ADP. In terms of biological role, essential for recycling GMP and indirectly, cGMP. The chain is Guanylate kinase from Fusobacterium nucleatum subsp. nucleatum (strain ATCC 25586 / DSM 15643 / BCRC 10681 / CIP 101130 / JCM 8532 / KCTC 2640 / LMG 13131 / VPI 4355).